A 536-amino-acid chain; its full sequence is 2-isopropylmalate synthase (536 aa).

The Pyruvate carboxyltransferase domain occupies 8–269 (IIIFDTTLRD…YYNPFLGRPV (262 aa)). Residues Asp-17, His-208, His-210, and Asn-244 each coordinate Mn(2+). The segment at 408 to 536 (RLELVQVSCG…KEKAAVTSAS (129 aa)) is regulatory domain.

It belongs to the alpha-IPM synthase/homocitrate synthase family. LeuA type 1 subfamily. As to quaternary structure, homodimer. It depends on Mn(2+) as a cofactor.

It localises to the cytoplasm. It carries out the reaction 3-methyl-2-oxobutanoate + acetyl-CoA + H2O = (2S)-2-isopropylmalate + CoA + H(+). Its pathway is amino-acid biosynthesis; L-leucine biosynthesis; L-leucine from 3-methyl-2-oxobutanoate: step 1/4. In terms of biological role, catalyzes the condensation of the acetyl group of acetyl-CoA with 3-methyl-2-oxobutanoate (2-ketoisovalerate) to form 3-carboxy-3-hydroxy-4-methylpentanoate (2-isopropylmalate). This is 2-isopropylmalate synthase from Gloeothece citriformis (strain PCC 7424) (Cyanothece sp. (strain PCC 7424)).